A 382-amino-acid polypeptide reads, in one-letter code: tRNA-specific 2-thiouridylase MnmA (382 aa).

ATP contacts are provided by residues 34–41 (AMSGGVDS) and leucine 60. Cysteine 128 acts as the Nucleophile in catalysis. Residues cysteine 128 and cysteine 224 are joined by a disulfide bond. Glycine 152 lines the ATP pocket. Residues 174 to 176 (RDQ) form an interaction with tRNA region. Cysteine 224 functions as the Cysteine persulfide intermediate in the catalytic mechanism.

It belongs to the MnmA/TRMU family.

It is found in the cytoplasm. The catalysed reaction is S-sulfanyl-L-cysteinyl-[protein] + uridine(34) in tRNA + AH2 + ATP = 2-thiouridine(34) in tRNA + L-cysteinyl-[protein] + A + AMP + diphosphate + H(+). Catalyzes the 2-thiolation of uridine at the wobble position (U34) of tRNA, leading to the formation of s(2)U34. The chain is tRNA-specific 2-thiouridylase MnmA from Sphingopyxis alaskensis (strain DSM 13593 / LMG 18877 / RB2256) (Sphingomonas alaskensis).